Here is a 380-residue protein sequence, read N- to C-terminus: Putative glutamate--cysteine ligase 2-1 (380 aa).

Belongs to the glutamate--cysteine ligase type 2 family. YbdK subfamily.

It carries out the reaction L-cysteine + L-glutamate + ATP = gamma-L-glutamyl-L-cysteine + ADP + phosphate + H(+). ATP-dependent carboxylate-amine ligase which exhibits weak glutamate--cysteine ligase activity. The sequence is that of Putative glutamate--cysteine ligase 2-1 from Mycolicibacterium vanbaalenii (strain DSM 7251 / JCM 13017 / BCRC 16820 / KCTC 9966 / NRRL B-24157 / PYR-1) (Mycobacterium vanbaalenii).